The chain runs to 373 residues: Alcohol dehydrogenase 2 (373 aa).

Zn(2+) contacts are provided by Cys47, Thr49, His69, Cys99, Cys102, Cys105, Cys113, and Cys177. 2 residues coordinate an alcohol: Thr49 and His69. Thr49 lines the NAD(+) pocket. NAD(+) is bound by residues 202 to 207, Asp226, Lys231, Thr272, Phe316, and Arg366; that span reads GLGAVG.

This sequence belongs to the zinc-containing alcohol dehydrogenase family. Homodimer. It depends on Zn(2+) as a cofactor.

It is found in the cytoplasm. It catalyses the reaction a primary alcohol + NAD(+) = an aldehyde + NADH + H(+). The enzyme catalyses a secondary alcohol + NAD(+) = a ketone + NADH + H(+). The sequence is that of Alcohol dehydrogenase 2 (ADH2) from Hordeum vulgare (Barley).